The primary structure comprises 129 residues: Protein Turandot A (129 aa).

The N-terminal stretch at 1 to 21 (MNSLTGFMCCALLLISPLCMG) is a signal peptide. Asn49 is a glycosylation site (N-linked (GlcNAc...) asparagine).

It belongs to the Turandot family.

The protein localises to the secreted. A humoral factor that plays a role in stress tolerance; gives increased resistance to the lethal effects of bacterial challenge and stress. Regulated by the JAK/STAT pathway and NF-KB-like Relish pathway in the fat body, upd3 in the hemocytes and Mekk1 in response to septic injury and consequent immune response. This chain is Protein Turandot A (TotA), found in Drosophila yakuba (Fruit fly).